A 308-amino-acid chain; its full sequence is Glutaminase (308 aa).

Substrate-binding residues include serine 66, asparagine 117, glutamate 162, asparagine 169, tyrosine 193, tyrosine 244, and valine 262.

The protein belongs to the glutaminase family. As to quaternary structure, homotetramer.

The catalysed reaction is L-glutamine + H2O = L-glutamate + NH4(+). This chain is Glutaminase, found in Natranaerobius thermophilus (strain ATCC BAA-1301 / DSM 18059 / JW/NM-WN-LF).